The primary structure comprises 542 residues: Chaperonin GroEL 4 (542 aa).

Residues 30 to 33, Lys-51, 87 to 91, Gly-415, and Asp-496 each bind ATP; these read TLGP and DGTTT.

This sequence belongs to the chaperonin (HSP60) family. Forms a cylinder of 14 subunits composed of two heptameric rings stacked back-to-back. Interacts with the co-chaperonin GroES.

It is found in the cytoplasm. The enzyme catalyses ATP + H2O + a folded polypeptide = ADP + phosphate + an unfolded polypeptide.. Its function is as follows. Together with its co-chaperonin GroES, plays an essential role in assisting protein folding. The GroEL-GroES system forms a nano-cage that allows encapsulation of the non-native substrate proteins and provides a physical environment optimized to promote and accelerate protein folding. The polypeptide is Chaperonin GroEL 4 (Rhizobium etli (strain ATCC 51251 / DSM 11541 / JCM 21823 / NBRC 15573 / CFN 42)).